The following is a 315-amino-acid chain: MPDMKLFSGNSIPKLAKFIANRLYINLGKASVGRFSDGEISVQINENVRGSDVFIIQSTCSPTNDNIMELVVMVDSLRRASAGRITAVIPYFGYARQDRRVRSARVPITAKVVADFLSSIGVDRVLTVDLHAEQIQGFFDVPVDNVFGSLILLEDMLQRELKNPIVVSPDIGGVVRARAIAKLLYDTDMAIIDKRRPRANVSQIMNIIGDVANRDCILVDDMIDTGGTLCKAAEALKERGAKRVFAYATHPVFSGDAPKNLKNSVIDEVVVCDTIPLSENIELLPNVRTLTLSGMLAEAIRRISNEESISAMFEH.

Residues 37–39 (DGE) and 96–97 (RQ) each bind ATP. His131 and Asp170 together coordinate Mg(2+). Residue Lys194 is part of the active site. D-ribose 5-phosphate is bound by residues Arg196, Asp220, and 224 to 228 (DTGGT).

This sequence belongs to the ribose-phosphate pyrophosphokinase family. Class I subfamily. Homohexamer. Requires Mg(2+) as cofactor.

Its subcellular location is the cytoplasm. It catalyses the reaction D-ribose 5-phosphate + ATP = 5-phospho-alpha-D-ribose 1-diphosphate + AMP + H(+). Its pathway is metabolic intermediate biosynthesis; 5-phospho-alpha-D-ribose 1-diphosphate biosynthesis; 5-phospho-alpha-D-ribose 1-diphosphate from D-ribose 5-phosphate (route I): step 1/1. Its function is as follows. Involved in the biosynthesis of the central metabolite phospho-alpha-D-ribosyl-1-pyrophosphate (PRPP) via the transfer of pyrophosphoryl group from ATP to 1-hydroxyl of ribose-5-phosphate (Rib-5-P). The protein is Ribose-phosphate pyrophosphokinase of Buchnera aphidicola subsp. Acyrthosiphon pisum (strain APS) (Acyrthosiphon pisum symbiotic bacterium).